A 247-amino-acid polypeptide reads, in one-letter code: 1-(5-phosphoribosyl)-5-[(5-phosphoribosylamino)methylideneamino] imidazole-4-carboxamide isomerase (247 aa).

Asp8 serves as the catalytic Proton acceptor. The Proton donor role is filled by Asp131.

It belongs to the HisA/HisF family.

Its subcellular location is the cytoplasm. It catalyses the reaction 1-(5-phospho-beta-D-ribosyl)-5-[(5-phospho-beta-D-ribosylamino)methylideneamino]imidazole-4-carboxamide = 5-[(5-phospho-1-deoxy-D-ribulos-1-ylimino)methylamino]-1-(5-phospho-beta-D-ribosyl)imidazole-4-carboxamide. It participates in amino-acid biosynthesis; L-histidine biosynthesis; L-histidine from 5-phospho-alpha-D-ribose 1-diphosphate: step 4/9. This chain is 1-(5-phosphoribosyl)-5-[(5-phosphoribosylamino)methylideneamino] imidazole-4-carboxamide isomerase, found in Ralstonia pickettii (strain 12J).